The following is a 146-amino-acid chain: 3-dehydroquinate dehydratase (146 aa).

The Proton acceptor role is filled by Y24. Substrate contacts are provided by N73, H79, and D86. The active-site Proton donor is H99. Substrate is bound by residues L100–S101 and R110.

This sequence belongs to the type-II 3-dehydroquinase family. In terms of assembly, homododecamer.

It catalyses the reaction 3-dehydroquinate = 3-dehydroshikimate + H2O. Its pathway is metabolic intermediate biosynthesis; chorismate biosynthesis; chorismate from D-erythrose 4-phosphate and phosphoenolpyruvate: step 3/7. Catalyzes a trans-dehydration via an enolate intermediate. The sequence is that of 3-dehydroquinate dehydratase from Shewanella baltica (strain OS185).